An 844-amino-acid polypeptide reads, in one-letter code: Neuronal PAS domain-containing protein 4B (844 aa).

Residues 61–74 (KMYRSTKGASKARR) form a basic motif; degenerate region. The 54-residue stretch at 61 to 114 (KMYRSTKGASKARRDQINAEIRSLKELLPISDADKARLSYLHIMSLACIYTRKS) folds into the bHLH domain. Residues 75 to 114 (DQINAEIRSLKELLPISDADKARLSYLHIMSLACIYTRKS) are helix-loop-helix motif. 2 consecutive PAS domains span residues 132–190 (SLPE…PVDH) and 294–343 (DMRI…LHNG). A compositionally biased stretch (polar residues) spans 410-422 (SRQSSDPLSSPDQ). Disordered regions lie at residues 410 to 432 (SRQS…SGLS), 444 to 479 (GRSS…GGGH), 702 to 725 (PLPN…SYSQ), and 757 to 784 (TEGG…EAPA). Residues 704–716 (PNLPSPSPVPPSP) are compositionally biased toward pro residues.

As to quaternary structure, efficient DNA binding requires dimerization with another bHLH protein.

The protein localises to the nucleus. Functionally, transcription factor expressed in neurons of the brain that regulates the excitatory-inhibitory balance within neural circuits and is required for contextual memory in the hippocampus. Plays a key role in the structural and functional plasticity of neurons. Acts as an early-response transcription factor in both excitatory and inhibitory neurons, where it induces distinct but overlapping sets of late-response genes in these two types of neurons, allowing the synapses that form on inhibitory and excitatory neurons to be modified by neuronal activity in a manner specific to their function within a circuit, thereby facilitating appropriate circuit responses to sensory experience. The sequence is that of Neuronal PAS domain-containing protein 4B (npas4b) from Danio rerio (Zebrafish).